The primary structure comprises 37 residues: Large ribosomal subunit protein bL36 (37 aa).

This sequence belongs to the bacterial ribosomal protein bL36 family.

The protein is Large ribosomal subunit protein bL36 of Desulforamulus reducens (strain ATCC BAA-1160 / DSM 100696 / MI-1) (Desulfotomaculum reducens).